A 299-amino-acid chain; its full sequence is Acetylglutamate kinase (299 aa).

Residues Gly-64–Gly-65, Arg-86, and Asn-197 each bind substrate.

The protein belongs to the acetylglutamate kinase family. ArgB subfamily.

It is found in the cytoplasm. The enzyme catalyses N-acetyl-L-glutamate + ATP = N-acetyl-L-glutamyl 5-phosphate + ADP. It functions in the pathway amino-acid biosynthesis; L-arginine biosynthesis; N(2)-acetyl-L-ornithine from L-glutamate: step 2/4. In terms of biological role, catalyzes the ATP-dependent phosphorylation of N-acetyl-L-glutamate. The polypeptide is Acetylglutamate kinase (Sulfurihydrogenibium sp. (strain YO3AOP1)).